The chain runs to 178 residues: Co-chaperone protein p23-1 (178 aa).

The CS domain maps to 2–91; sequence SRHPTVKWAQ…AESKWWNRLT (90 aa). Acidic residues-rich tracts occupy residues 112-126 and 136-155; these read DDED…DFGD and DTDE…EGET. A disordered region spans residues 112-178; that stretch reads DDEDKGGEGD…DEEGVNAKKD (67 aa). The span at 157–178 shows a compositional bias: basic and acidic residues; the sequence is AETKEKKIDGEKDEEGVNAKKD.

Belongs to the p23/wos2 family. Interacts with HSP90 in an ATP-dependent manner.

Its function is as follows. Acts as a co-chaperone for HSP90. In Brassica napus (Rape), this protein is Co-chaperone protein p23-1.